We begin with the raw amino-acid sequence, 1505 residues long: Myosin-6 (1505 aa).

The Myosin N-terminal SH3-like domain maps to 8–57 (SVGSFVWVEDPDEAWIDGEVVQVNGDEIKVLCTSGKHVVTKISNAYPKDV). Positions 62–731 (SGVDDMTRLA…QMADLDTRRT (670 aa)) constitute a Myosin motor domain. Residues 156–163 (GESGAGKT) and 209–217 (NNNSSRFGK) each bind ATP. Actin-binding regions lie at residues 495–529 (LIEK…YQTF), 531–554 (THKR…AGDV), 589–612 (FPPM…KQQL), and 612–634 (LVSL…KPNN). 6 IQ domains span residues 734–763 (LGRS…SAKQ), 757–786 (LRNS…EAAA), 782–811 (REAA…AAVS), 805–834 (LYSA…TKAA), 830–859 (QTKA…AAIT), and 853–882 (LKKA…AARE). Residues 883–1048 (TGALQAAKNK…AEKKIMHQQT (166 aa)) are a coiled coil. The 305-residue stretch at 1148–1452 (DRLIQMIGSA…ISSMRTLMTE (305 aa)) folds into the Dilute domain.

This sequence belongs to the TRAFAC class myosin-kinesin ATPase superfamily. Myosin family. Plant myosin class XI subfamily. In terms of assembly, homodimer. Interacts with RABC2A and RABD1. In terms of tissue distribution, expressed in flowers, leaves, roots and stems.

It localises to the cytoplasm. Functionally, myosin heavy chain that is required for the cell cycle-regulated transport of various organelles and proteins for their segregation. Functions by binding with its tail domain to receptor proteins on organelles and exerting force with its N-terminal motor domain against actin filaments, thereby transporting its cargo along polarized actin cables. Involved in the tip growth of root hair cells. Plays a major role in trafficking of Golgi stacks, mitochondria and peroxisomes during root hair development. Targets the peroxisome through an interaction with RABC2A. Required for development of pavement cells, trichomes, and stigmatic papillae. The sequence is that of Myosin-6 (XI-2) from Arabidopsis thaliana (Mouse-ear cress).